Reading from the N-terminus, the 236-residue chain is uncharacterized protein (236 aa).

Residues 1 to 12 (MKLLGHRKSHGH) show a composition bias toward basic residues. Positions 1–108 (MKLLGHRKSH…KAANRARMTE (108 aa)) are disordered. Residues 13–31 (QRADASPDAGSKDGCRPDS) are compositionally biased toward basic and acidic residues. The span at 32-47 (GRTSGSDTSRGSQTTG) shows a compositional bias: low complexity. Residues 52-65 (PTPKRNQSRRHTKK) show a composition bias toward basic residues. Residues 67–78 (PVAPAPMTAAQA) show a composition bias toward low complexity. Residues 90 to 108 (LSREERRAEKAANRARMTE) show a composition bias toward basic and acidic residues. Transmembrane regions (helical) follow at residues 142-162 (NLLGLFMPSALTLLFVMFAVP) and 166-186 (FYLSPAMLILLALMTIDAIIL).

The protein localises to the cell membrane. This is an uncharacterized protein from Mycobacterium tuberculosis (strain CDC 1551 / Oshkosh).